Consider the following 209-residue polypeptide: Uracil phosphoribosyltransferase (209 aa).

5-phospho-alpha-D-ribose 1-diphosphate-binding positions include R79, R104, and 131 to 139; that span reads DPMLATGGS. Uracil-binding positions include I194 and 199–201; that span reads GDA. Residue D200 coordinates 5-phospho-alpha-D-ribose 1-diphosphate.

This sequence belongs to the UPRTase family. Requires Mg(2+) as cofactor.

The catalysed reaction is UMP + diphosphate = 5-phospho-alpha-D-ribose 1-diphosphate + uracil. The protein operates within pyrimidine metabolism; UMP biosynthesis via salvage pathway; UMP from uracil: step 1/1. Its activity is regulated as follows. Allosterically activated by GTP. In terms of biological role, catalyzes the conversion of uracil and 5-phospho-alpha-D-ribose 1-diphosphate (PRPP) to UMP and diphosphate. The chain is Uracil phosphoribosyltransferase from Alkaliphilus oremlandii (strain OhILAs) (Clostridium oremlandii (strain OhILAs)).